A 1202-amino-acid chain; its full sequence is Putative late blight resistance protein homolog R1B-8 (1202 aa).

2 coiled-coil regions span residues 345-368 and 437-459; these read RYSD…ESLQ and LRMN…RLLN. The NB-ARC domain occupies 426 to 741; that stretch reads IARTSSQLAR…ISESFIKSCE (316 aa). Residue 471 to 478 coordinates ATP; that stretch reads GMPGLGKT. LRR repeat units lie at residues 865 to 889, 908 to 936, 1011 to 1036, 1040 to 1059, 1060 to 1084, 1086 to 1111, and 1128 to 1151; these read FKFL…LFYL, LWNL…VWDM, PIRL…ISAP, YLKL…TADH, LKHL…VSNG, FPQL…VFPN, and SCFM…VVQS.

Belongs to the disease resistance NB-LRR family.

The protein localises to the cytoplasm. The protein resides in the membrane. In terms of biological role, confers resistance to late blight (Phytophthora infestans) races carrying the avirulence gene Avr1. Resistance proteins guard the plant against pathogens that contain an appropriate avirulence protein via an indirect interaction with this avirulence protein. That triggers a defense system including the hypersensitive response, which restricts the pathogen growth. The protein is Putative late blight resistance protein homolog R1B-8 (R1B-8) of Solanum demissum (Wild potato).